The following is a 31-amino-acid chain: Cyclotide cter-C (31 aa).

Residues 1-31 constitute a cross-link (cyclopeptide (Gly-Asp)); sequence GVPCAESCVWIPCTVTALLGCSCKDKVCYLD. 3 cysteine pairs are disulfide-bonded: Cys-4/Cys-21, Cys-8/Cys-23, and Cys-13/Cys-28.

In terms of processing, contains 3 disulfide bonds. Post-translationally, this is a cyclic peptide.

In terms of biological role, probably participates in a plant defense mechanism. The chain is Cyclotide cter-C from Clitoria ternatea (Butterfly pea).